A 399-amino-acid chain; its full sequence is Elongation factor Tu (399 aa).

One can recognise a tr-type G domain in the interval 10-209 (KPHVNIGTIG…EVDAYIPTPE (200 aa)). Positions 19-26 (GHVDHGKT) are G1. 19-26 (GHVDHGKT) is a binding site for GTP. Position 26 (threonine 26) interacts with Mg(2+). The interval 60–64 (GITIA) is G2. Residues 81–84 (DCPG) form a G3 region. GTP is bound by residues 81–85 (DCPGH) and 136–139 (NKQD). Residues 136–139 (NKQD) are G4. Residues 174–176 (SAL) form a G5 region.

The protein belongs to the TRAFAC class translation factor GTPase superfamily. Classic translation factor GTPase family. EF-Tu/EF-1A subfamily. In terms of assembly, monomer.

It is found in the cytoplasm. The catalysed reaction is GTP + H2O = GDP + phosphate + H(+). GTP hydrolase that promotes the GTP-dependent binding of aminoacyl-tRNA to the A-site of ribosomes during protein biosynthesis. This is Elongation factor Tu from Helicobacter pylori (strain Shi470).